The sequence spans 202 residues: GTP cyclohydrolase 1 (202 aa).

Zn(2+) contacts are provided by C90, H93, and C163.

Belongs to the GTP cyclohydrolase I family. In terms of assembly, homomer.

The enzyme catalyses GTP + H2O = 7,8-dihydroneopterin 3'-triphosphate + formate + H(+). It functions in the pathway cofactor biosynthesis; 7,8-dihydroneopterin triphosphate biosynthesis; 7,8-dihydroneopterin triphosphate from GTP: step 1/1. This is GTP cyclohydrolase 1 from Mycobacterium ulcerans (strain Agy99).